A 323-amino-acid chain; its full sequence is Beta-ketoacyl-[acyl-carrier-protein] synthase III (323 aa).

Residues Cys113 and His250 contribute to the active site. The interval 251-255 is ACP-binding; sequence QANKR. Residue Asn280 is part of the active site.

Belongs to the thiolase-like superfamily. FabH family. As to quaternary structure, homodimer.

Its subcellular location is the cytoplasm. It carries out the reaction malonyl-[ACP] + acetyl-CoA + H(+) = 3-oxobutanoyl-[ACP] + CO2 + CoA. Its pathway is lipid metabolism; fatty acid biosynthesis. Catalyzes the condensation reaction of fatty acid synthesis by the addition to an acyl acceptor of two carbons from malonyl-ACP. Catalyzes the first condensation reaction which initiates fatty acid synthesis and may therefore play a role in governing the total rate of fatty acid production. Possesses both acetoacetyl-ACP synthase and acetyl transacylase activities. Its substrate specificity determines the biosynthesis of branched-chain and/or straight-chain of fatty acids. The chain is Beta-ketoacyl-[acyl-carrier-protein] synthase III from Brucella melitensis biotype 2 (strain ATCC 23457).